Here is a 720-residue protein sequence, read N- to C-terminus: Aminopeptidase RNPEPL1 (720 aa).

321–325 (VAMEN) is a substrate binding site. H348 is a binding site for Zn(2+). The active-site Proton acceptor is the E349. The Zn(2+) site is built by H352 and E371. The interval 671 to 708 (GLGPSAEPSTEPSTDLGGAEADTNPDSPALLLGDEAPS) is disordered.

The protein belongs to the peptidase M1 family. Zn(2+) is required as a cofactor.

The catalysed reaction is Release of N-terminal amino acids, preferentially methionine, from peptides and arylamides.. Broad specificity aminopeptidase which preferentially hydrolyzes an N-terminal methionine, citrulline or glutamine. This is Aminopeptidase RNPEPL1 from Mus musculus (Mouse).